Reading from the N-terminus, the 543-residue chain is Zinc finger protein egl-43 (543 aa).

Positions 2–62 (SIDTDFLTSV…NLIKEADDGE (61 aa)) are positive regulatory (PR) domain. C2H2-type zinc fingers lie at residues 159 to 181 (HKCG…SHIH) and 187 to 209 (FRCH…RRVH). A C2H2-type 3; atypical zinc finger spans residues 213-233 (WTCPTCQSQMPSQAALTKHRP). The disordered stretch occupies residues 299-380 (PDAECSSGHA…TSTKKRPTSH (82 aa)). A compositionally biased stretch (polar residues) spans 306 to 317 (GHASESSPTTTE). Residues 335–348 (TTSKSDDGEDRDSI) are compositionally biased toward basic and acidic residues. 2 consecutive C2H2-type zinc fingers follow at residues 444 to 466 (YTCK…LRTH) and 472 to 495 (YKCQ…RNIH). The tract at residues 496–543 (NKPNTSLTPHNHHRQRSLHNSTSTSTTTTTVHHPLLHLPGTSVPVPKV) is disordered. Residues 513 to 533 (LHNSTSTSTTTTTVHHPLLHL) are compositionally biased toward low complexity.

It is found in the nucleus. In terms of biological role, probable transcription factor, required for migration of the hermaphrodite-specific motor neurons (HSNs) from the tail to the gonad primordium during HSN cell differentiation. Required for phasmid neuron development. Required to specify the pi-cell fate of ventral uterine precursor cell (VU) cells. Probable transcription factor, involved in lin-12 (Notch)-dependent anchor cell (AC) and ventral uterine (VU) precursor cell fate specification and in AC invasion. Prevents AC proliferation after AC cell specification by repressing lin-12 expression. May form a positive feedback loop, together with the transcription factor fos-1, that maintains mutual high levels of expression and so activates AC invasion. Its function is as follows. Dispensable for anchor cell (AC) invasion and for preventing AC proliferation. This chain is Zinc finger protein egl-43, found in Caenorhabditis elegans.